A 156-amino-acid chain; its full sequence is Transcription antitermination protein NusB (156 aa).

It belongs to the NusB family.

Its function is as follows. Involved in transcription antitermination. Required for transcription of ribosomal RNA (rRNA) genes. Binds specifically to the boxA antiterminator sequence of the ribosomal RNA (rrn) operons. The chain is Transcription antitermination protein NusB from Rickettsia felis (strain ATCC VR-1525 / URRWXCal2) (Rickettsia azadi).